We begin with the raw amino-acid sequence, 1472 residues long: Type IV pilus biogenesis factor PilY1 homolog PD_1611 (1472 aa).

Positions 1170, 1172, 1174, 1176, and 1178 each coordinate Ca(2+). Residues 1383-1397 (RGSRSSIGNSDTGAV) show a composition bias toward polar residues. Residues 1383–1403 (RGSRSSIGNSDTGAVSTGGDA) form a disordered region.

It belongs to the PilY1 family.

The protein resides in the fimbrium. Functionally, one of the three PilY1 homologs of X.fastidiosa, which are involved in bacterial twitching motility as component of the filamentous type IV pili (T4P). The twitching motility of this protein is enhanced by calcium, which may provide the bacterium an adaptive advantage in environments with high calcium concentrations. This chain is Type IV pilus biogenesis factor PilY1 homolog PD_1611, found in Xylella fastidiosa (strain Temecula1 / ATCC 700964).